A 252-amino-acid chain; its full sequence is Geranylgeranylglyceryl phosphate synthase (252 aa).

Mg(2+) contacts are provided by aspartate 27 and serine 56. Residues 175 to 181, 206 to 207, and 228 to 229 contribute to the sn-glycerol 1-phosphate site; these read YLEAGSG, GG, and GT.

This sequence belongs to the GGGP/HepGP synthase family. Group II subfamily. Requires Mg(2+) as cofactor.

The protein resides in the cytoplasm. It catalyses the reaction sn-glycerol 1-phosphate + (2E,6E,10E)-geranylgeranyl diphosphate = sn-3-O-(geranylgeranyl)glycerol 1-phosphate + diphosphate. It functions in the pathway membrane lipid metabolism; glycerophospholipid metabolism. Its function is as follows. Prenyltransferase that catalyzes the transfer of the geranylgeranyl moiety of geranylgeranyl diphosphate (GGPP) to the C3 hydroxyl of sn-glycerol-1-phosphate (G1P). This reaction is the first ether-bond-formation step in the biosynthesis of archaeal membrane lipids. This chain is Geranylgeranylglyceryl phosphate synthase, found in Pyrococcus abyssi (strain GE5 / Orsay).